Here is a 51-residue protein sequence, read N- to C-terminus: Small ribosomal subunit protein eS31 (51 aa).

The Zn(2+) site is built by Cys21, Cys24, Cys39, and Cys42. The segment at 21–42 adopts a C4-type zinc-finger fold; sequence CVRCSNGVFMADHGDRYACGKC.

Belongs to the eukaryotic ribosomal protein eS31 family. As to quaternary structure, part of the 30S ribosomal subunit. It depends on Zn(2+) as a cofactor.

This is Small ribosomal subunit protein eS31 from Methanothermobacter thermautotrophicus (strain ATCC 29096 / DSM 1053 / JCM 10044 / NBRC 100330 / Delta H) (Methanobacterium thermoautotrophicum).